We begin with the raw amino-acid sequence, 274 residues long: Large ribosomal subunit protein uL2 (274 aa).

2 disordered regions span residues 21 to 59 (KVGL…GGHK) and 224 to 274 (AMNP…QLKG). Residues 32–42 (SLTSGKKSSGG) show a composition bias toward low complexity. Residues 45–59 (NHGRITTRHRGGGHK) are compositionally biased toward basic residues. Residues 263-274 (KSSDKYIKQLKG) show a composition bias toward basic and acidic residues.

The protein belongs to the universal ribosomal protein uL2 family. In terms of assembly, part of the 50S ribosomal subunit. Forms a bridge to the 30S subunit in the 70S ribosome.

Its function is as follows. One of the primary rRNA binding proteins. Required for association of the 30S and 50S subunits to form the 70S ribosome, for tRNA binding and peptide bond formation. It has been suggested to have peptidyltransferase activity; this is somewhat controversial. Makes several contacts with the 16S rRNA in the 70S ribosome. This is Large ribosomal subunit protein uL2 from Wolbachia pipientis wMel.